The following is a 1627-amino-acid chain: Type III effector DspE (1627 aa).

Polar residues-rich tracts occupy residues Ala22–Gln44 and Gly59–Leu74. Disordered stretches follow at residues Ala22 to Gln102 and Gln436 to Trp464. Short sequence motifs (wxxxE) lie at residues Trp464 to Asp468, Trp514 to Glu520, and Trp660 to Asp667.

Belongs to the AvrE family.

Its subcellular location is the secreted. The protein localises to the host cell. In terms of biological role, major virulence factor that may function as a water- and solute-permeable channel dedicated to creating osmotic/water potential perturbation and a water- and nutrient-rich apoplast in which bacteria multiply within the infected plant tissues. Its function is as follows. Required for plant cell death in N.benthamiana leaves and leaf cell death in S.tuberosum. Essential for pathogenicity. Does not suppress callose formation. This is Type III effector DspE from Pectobacterium carotovorum (Erwinia carotovora).